We begin with the raw amino-acid sequence, 736 residues long: MGNPENIEDAYVAVIRPKNTASLNSREYRAKSYEILLHEVPIEGQKKKRKKVLLETKLQGNSEITQGILDYVVETTKPISPANQGIRGKRVVLMKKFPLDGEKMGREASLFIVPSVVKDNTKYTYTPGCPIFYCLQDIMRVCSESSTHFATLTARMLIALDKWLDERHAQSHFIPALFRPSPLERIKTNVINPAYATESGQTENSLHMGYSALEIKSKMLALEKADTCIYNPLFGSDLQYTNRVDKVVINPYFGLGAPDYSKIQIPKQEKWQRSMSSVTEDKERQWVDDFPLHRSACEGDSELLSRLLSERFSVNQLDSDHWAPIHYACWYGKVEATRILLEKGKCNPNLLNGQLSSPLHFAAGGGHAEIVQILLNHPETDRHITDQQGRSPLNICEENKQNNWEEAAKLLKEAINKPYEKVRIYRMDGSYRSVELKHGNNTTVQQIMEGMRLSQETQQYFTIWICSENLSLQLKPYHKPLQHVRDWPEILAELTNLDPQRETPQLFLRRDVRLPLEVEKQIEDPLAILILFDEARYNLLKGFYTAPDAKLITLASLLLQIVYGNYESKKHKQGFLNEENLKSIVPVTKLKSKAPHWTNRILHEYKNLSTSEGVSKEMHHLQRMFLQNCWEIPTYGAAFFTGQIFTKASPSNHKVIPVYVGVNIKGLHLLNMETKALLISLKYGCFMWQLGDTDTCFQIHSMENKMSFIVHTKQAGLVVKLLMKLNGQLMPTERNS.

The tract at residues 1–170 (MGNPENIEDA…DKWLDERHAQ (170 aa)) is N-terminal domain similar to Nudix hydrolase domain. The tract at residues 172–195 (HFIPALFRPSPLERIKTNVINPAY) is interaction with ITGB1BP1. ANK repeat units follow at residues 287-316 (VDDF…SVNQ), 320-350 (DHWA…NPNL), 354-383 (QLSS…TDRH), and 388-419 (QGRS…NKPY). Residues 420–734 (EKVRIYRMDG…LNGQLMPTER (315 aa)) form the FERM domain. The tract at residues 430–452 (SYRSVELKHGNNTTVQQIMEGMR) is interaction with RAP1B.

In terms of assembly, interacts with CDH5. Found in a complex, at least composed of ITGB1BP1, KRIT1 and RAP1A. Interacts (via C-terminus FERM domain) with RAP1A (active GTP-bound form preferentially); the interaction does not induce the opening conformation of KRIT1. Interacts (via FERM domain) with RAP1B. Interacts (via N-terminus NPXY motif) with ITGB1BP1; the interaction induces the opening conformation of KRIT1 and competes with ITGB1 for ITGB1BP1 interaction. Interacts with HEG1 and CCM2; greatly facilitates CCM2-binding to HEG1. Associates (via N-terminus and C-terminus regions) with microtubules; the interaction is inhibited in presence of ITGB1BP1 and active GTP-bound RAP1A. In terms of tissue distribution, low levels in brain. Very weak expression found in heart and muscle.

The protein resides in the cytoplasm. Its subcellular location is the cytoskeleton. It is found in the cell membrane. It localises to the cell junction. Functionally, component of the CCM signaling pathway which is a crucial regulator of heart and vessel formation and integrity. Negative regulator of angiogenesis. Inhibits endothelial proliferation, apoptosis, migration, lumen formation and sprouting angiogenesis in primary endothelial cells. Promotes AKT phosphorylation in a NOTCH-dependent and independent manner, and inhibits ERK1/2 phosphorylation indirectly through activation of the DELTA-NOTCH cascade. Acts in concert with CDH5 to establish and maintain correct endothelial cell polarity and vascular lumen and these effects are mediated by recruitment and activation of the Par polarity complex and RAP1B. Required for the localization of phosphorylated PRKCZ, PARD3, TIAM1 and RAP1B to the cell junction, and cell junction stabilization. Plays a role in integrin signaling via its interaction with ITGB1BP1; this prevents the interaction between ITGB1 and ITGB1BP1. Microtubule-associated protein that binds to phosphatidylinositol 4,5-bisphosphate (PIP2)-containing membranes in a GTP-bound RAP1-dependent manner. Plays an important role in the maintenance of the intracellular reactive oxygen species (ROS) homeostasis to prevent oxidative cellular damage. Regulates the homeostasis of intracellular ROS through an antioxidant pathway involving FOXO1 and SOD2. Facilitates the down-regulation of cyclin-D1 (CCND1) levels required for cell transition from proliferative growth to quiescence by preventing the accumulation of intracellular ROS through the modulation of FOXO1 and SOD2 levels. May play a role in the regulation of macroautophagy through the down-regulation of the mTOR pathway. In Homo sapiens (Human), this protein is Krev interaction trapped protein 1 (KRIT1).